Consider the following 951-residue polypeptide: Valine--tRNA ligase (951 aa).

A 'HIGH' region motif is present at residues 40–50; sequence PNVTGSLHMGH. The 'KMSKS' region motif lies at 551–555; that stretch reads KMSKS. Lys-554 provides a ligand contact to ATP. Residues 879-950 adopt a coiled-coil conformation; it reads MAGLIDVEAE…LLEQKAKIES (72 aa).

Belongs to the class-I aminoacyl-tRNA synthetase family. ValS type 1 subfamily. In terms of assembly, monomer.

The protein localises to the cytoplasm. The enzyme catalyses tRNA(Val) + L-valine + ATP = L-valyl-tRNA(Val) + AMP + diphosphate. Its function is as follows. Catalyzes the attachment of valine to tRNA(Val). As ValRS can inadvertently accommodate and process structurally similar amino acids such as threonine, to avoid such errors, it has a 'posttransfer' editing activity that hydrolyzes mischarged Thr-tRNA(Val) in a tRNA-dependent manner. The polypeptide is Valine--tRNA ligase (Pseudoalteromonas translucida (strain TAC 125)).